A 441-amino-acid chain; its full sequence is Probable D-serine dehydratase (441 aa).

The residue at position 117 (lysine 117) is an N6-(pyridoxal phosphate)lysine.

It belongs to the serine/threonine dehydratase family. DsdA subfamily. Pyridoxal 5'-phosphate serves as cofactor.

It carries out the reaction D-serine = pyruvate + NH4(+). This is Probable D-serine dehydratase from Acinetobacter baylyi (strain ATCC 33305 / BD413 / ADP1).